A 263-amino-acid chain; its full sequence is uncharacterized protein (263 aa).

7 helical membrane passes run 1-21 (MLVIVLQGLAGFLSIIAILCQ), 38-58 (LFLLDFVGNGLYLYCALHYCY), 82-102 (IPISSFLILKDFCVSCCCMMV), 118-138 (GISITSIIIISVFLVLGIFTY), 151-171 (GKFGVFYLEHINYLWVMANLL), 196-216 (FALISFLAESIDLLGRLVIPT), and 230-250 (FWVKLIQFVTLLVILCQVQYV).

The protein resides in the membrane. This is an uncharacterized protein from Saccharomyces cerevisiae (strain ATCC 204508 / S288c) (Baker's yeast).